We begin with the raw amino-acid sequence, 303 residues long: Probable 5-dehydro-4-deoxyglucarate dehydratase (303 aa).

It belongs to the DapA family.

The enzyme catalyses 5-dehydro-4-deoxy-D-glucarate + H(+) = 2,5-dioxopentanoate + CO2 + H2O. Its pathway is carbohydrate acid metabolism; D-glucarate degradation; 2,5-dioxopentanoate from D-glucarate: step 2/2. The sequence is that of Probable 5-dehydro-4-deoxyglucarate dehydratase from Acinetobacter baumannii (strain SDF).